Reading from the N-terminus, the 114-residue chain is Putative movement protein (114 aa).

The helical transmembrane segment at 27 to 47 threads the bilayer; it reads LIGIILLVTVCLIVLWVCIML. The tract at residues 79-114 is disordered; it reads RTPFEATGPERERNWDARRQSTTVNPASQPNTGSVF. Residues 86 to 97 are compositionally biased toward basic and acidic residues; it reads GPERERNWDARR. Over residues 98–114 the composition is skewed to polar residues; the sequence is QSTTVNPASQPNTGSVF.

It belongs to the nanovirus movement protein family.

The protein localises to the host cell membrane. Functionally, may transport viral genome to neighboring plant cells directly through plasmosdesmata, without any budding. The movement protein allows efficient cell to cell propagation, by bypassing the host cell wall barrier. This Faba bean necrotic yellows virus (isolate Syrian SV292-88) (FBNYV) protein is Putative movement protein (DNA-M).